The chain runs to 704 residues: Seven transmembrane domain-containing serine/threonine-protein kinase 2 (704 aa).

Over 1–5 (MPSKE) the chain is Extracellular. Residues 6 to 26 (FIIPLILLCFYSVNGFVAVIS) form a helical membrane-spanning segment. Residues 27 to 42 (SLVELFIHKASWNSIK) are Cytoplasmic-facing. Residues 43 to 63 (IFFYSLLILQCLCRCIIIGWG) form a helical membrane-spanning segment. The Extracellular portion of the chain corresponds to 64-76 (MIETVQGGEFYSN). The helical transmembrane segment at 77 to 97 (FPSLLFISYAGLVALQMIQFL) threads the bilayer. Residues 98–121 (PNDNQYLLLSEGKKNNHKVKVGTN) are Cytoplasmic-facing. Residues 122–142 (ILIFFNLFMYFGMFLLFGIAE) traverse the membrane as a helical segment. Over 143-185 (KQVGNSTSFNHHGNHNSTTSTSTDEIPLVSTEVGELYLFGDKD) the chain is Extracellular. N-linked (GlcNAc...) asparagine glycans are attached at residues Asn147 and Asn158. A helical membrane pass occupies residues 186-206 (PIYIVLDCFYFVCLLLLLIFH). Topologically, residues 207–224 (SYVGWKTYKRNKDLFGIK) are cytoplasmic. The chain crosses the membrane as a helical span at residues 225–245 (LNVIHLILLICIFIRSLLVII). Residues 246-265 (DPSSPNNSILHIDTESWLIY) are Extracellular-facing. An N-linked (GlcNAc...) asparagine glycan is attached at Asn251. A helical membrane pass occupies residues 266 to 286 (IYTISYYVVGEIIPGMLLIVI). Residues 287-704 (EFLLPYHKRK…WSIEKDSSSK (418 aa)) are Cytoplasmic-facing. In terms of domain architecture, Protein kinase spans 317–682 (IAIHELLGMG…SLGVKFHLAN (366 aa)). ATP-binding positions include 323–331 (LGMGGSGAM) and Lys350. Asp506 acts as the Proton acceptor in catalysis.

Belongs to the protein kinase superfamily. Ser/Thr protein kinase family.

Its subcellular location is the membrane. It catalyses the reaction L-seryl-[protein] + ATP = O-phospho-L-seryl-[protein] + ADP + H(+). The catalysed reaction is L-threonyl-[protein] + ATP = O-phospho-L-threonyl-[protein] + ADP + H(+). In Dictyostelium discoideum (Social amoeba), this protein is Seven transmembrane domain-containing serine/threonine-protein kinase 2 (7tmk2).